The following is a 280-amino-acid chain: Aspartate/glutamate leucyltransferase (280 aa).

It belongs to the R-transferase family. Bpt subfamily.

Its subcellular location is the cytoplasm. The enzyme catalyses N-terminal L-glutamyl-[protein] + L-leucyl-tRNA(Leu) = N-terminal L-leucyl-L-glutamyl-[protein] + tRNA(Leu) + H(+). The catalysed reaction is N-terminal L-aspartyl-[protein] + L-leucyl-tRNA(Leu) = N-terminal L-leucyl-L-aspartyl-[protein] + tRNA(Leu) + H(+). Its function is as follows. Functions in the N-end rule pathway of protein degradation where it conjugates Leu from its aminoacyl-tRNA to the N-termini of proteins containing an N-terminal aspartate or glutamate. This is Aspartate/glutamate leucyltransferase from Cereibacter sphaeroides (strain KD131 / KCTC 12085) (Rhodobacter sphaeroides).